Here is a 1186-residue protein sequence, read N- to C-terminus: Pumilio homolog 1 (1186 aa).

Serine 2 is modified (N-acetylserine). The residue at position 19 (serine 19) is a Phosphoserine. Residues 22–73 form a disordered region; the sequence is LKHHPQEPANPNMPVVLTSGTGSQAQPQPAANQALAAGTHSSPVPGSIGVAG. The segment covering 45–58 has biased composition (low complexity); that stretch reads QAQPQPAANQALAA. Residues serine 75, serine 98, and serine 106 each carry the phosphoserine modification. At threonine 112 the chain carries Phosphothreonine. Residues serine 124, serine 159, serine 197, serine 209, and serine 229 each carry the phosphoserine modification. Residues 233-272 form a disordered region; it reads SCLRKGGFGPRDADSDENDKGEKKNKGTFDGDKLGDLKEE. Positions 250–272 are enriched in basic and acidic residues; it reads NDKGEKKNKGTFDGDKLGDLKEE. Serine 305 carries the phosphoserine modification. Over residues 485–502 the composition is skewed to low complexity; the sequence is TNSANQQTTPQAQQGQQQ. 2 disordered regions span residues 485–524 and 613–648; these read TNSA…GQQT and AGTT…FYGN. Residues 511-524 show a composition bias toward polar residues; sequence RPLTPNQNQQGQQT. The residue at position 514 (threonine 514) is a Phosphothreonine. The segment covering 626–639 has biased composition (low complexity); sequence QQPQPQPQQQPNNN. A phosphoserine mark is found at serine 709 and serine 714. The disordered stretch occupies residues 742–773; the sequence is GPVGMPLPSQGPGHSQTPPPSLSSHGSSSSLN. Residues 763–773 show a composition bias toward low complexity; it reads LSSHGSSSSLN. Arginine 796 carries the omega-N-methylarginine modification. Serine 806 and serine 822 each carry phosphoserine. In terms of domain architecture, PUM-HD spans 828–1168; that stretch reads GRSRLLEDFR…HILAKLEKYY (341 aa). Pumilio repeat units follow at residues 848 to 883, 884 to 919, 920 to 955, 956 to 991, 992 to 1027, 1028 to 1063, 1064 to 1099, and 1103 to 1142; these read EIAG…LVFN, EILQ…ALAE, RIRG…EMVR, ELDG…FIID, AFKG…PILE, ELHQ…KIVA, EIRG…VLID, and TMND…IVMH. The segment at 863–867 is adenine-nucleotide binding in RNA target; the sequence is SRFIQ. The tract at residues 899–903 is uracil-nucleotide binding in RNA target; it reads NYVIQ. The interval 935–939 is adenine-nucleotide binding in RNA target; it reads CRVIQ. The segment at 971 to 975 is non-specific-nucleotide binding in RNA target; sequence NHVVQ. The segment at 1007-1011 is adenine-nucleotide binding in RNA target; that stretch reads CRVIQ. Positions 1043-1047 are uracil-nucleotide binding in RNA target; it reads NYVIQ. The guanine-nucleotide binding in RNA target stretch occupies residues 1079-1083; the sequence is SNVVE. Residues 1122–1126 form a uracil-nucleotide binding in RNA target region; that stretch reads NYVVQ.

In terms of assembly, recruits the CCR4-POP2-NOT deadenylase leading to translational inhibition and mRNA degradation. In case of viral infection, interacts with DHX58. Interacts with TRIM71 (via NHL repeats) in an RNA-dependent manner. Post-translationally, phosphorylation at Ser-714 promotes RNA-binding activity. Following growth factor stimulation phosphorylated at Ser-714, promoting binding to the 3'-UTR of CDKN1B/p27 mRNA. As to expression, expressed in brain, heart, kidney, muscle, intestine and stomach. Not expressed in cerebellum, corpus callosum, caudate nucleus, hippocampus, medulla oblongata and putamen. Expressed in all fetal tissues tested.

It is found in the cytoplasm. The protein localises to the P-body. The protein resides in the cytoplasmic granule. Sequence-specific RNA-binding protein that acts as a post-transcriptional repressor by binding the 3'-UTR of mRNA targets. Binds to an RNA consensus sequence, the Pumilio Response Element (PRE), 5'-UGUANAUA-3', that is related to the Nanos Response Element (NRE). Mediates post-transcriptional repression of transcripts via different mechanisms: acts via direct recruitment of the CCR4-POP2-NOT deadenylase leading to translational inhibition and mRNA degradation. Also mediates deadenylation-independent repression by promoting accessibility of miRNAs. Following growth factor stimulation, phosphorylated and binds to the 3'-UTR of CDKN1B/p27 mRNA, inducing a local conformational change that exposes miRNA-binding sites, promoting association of miR-221 and miR-222, efficient suppression of CDKN1B/p27 expression, and rapid entry to the cell cycle. Acts as a post-transcriptional repressor of E2F3 mRNAs by binding to its 3'-UTR and facilitating miRNA regulation. Represses a program of genes necessary to maintain genomic stability such as key mitotic, DNA repair and DNA replication factors. Its ability to repress those target mRNAs is regulated by the lncRNA NORAD (non-coding RNA activated by DNA damage) which, due to its high abundance and multitude of PUMILIO binding sites, is able to sequester a significant fraction of PUM1 and PUM2 in the cytoplasm. Involved in neuronal functions by regulating ATXN1 mRNA levels: acts by binding to the 3'-UTR of ATXN1 transcripts, leading to their down-regulation independently of the miRNA machinery. Plays a role in cytoplasmic sensing of viral infection. In testis, acts as a post-transcriptional regulator of spermatogenesis by binding to the 3'-UTR of mRNAs coding for regulators of p53/TP53. Involved in embryonic stem cell renewal by facilitating the exit from the ground state: acts by targeting mRNAs coding for naive pluripotency transcription factors and accelerates their down-regulation at the onset of differentiation. Binds specifically to miRNA MIR199A precursor, with PUM2, regulates miRNA MIR199A expression at a postranscriptional level. This chain is Pumilio homolog 1, found in Homo sapiens (Human).